A 550-amino-acid chain; its full sequence is GMP synthase [glutamine-hydrolyzing] (550 aa).

A Glutamine amidotransferase type-1 domain is found at 39-232; the sequence is RILILDFGSQ…VHKICGCGGL (194 aa). The active-site Nucleophile is cysteine 116. Residues histidine 206 and glutamate 208 contribute to the active site. The region spanning 233 to 425 is the GMPS ATP-PPase domain; that stretch reads WTPEHIIDLR…LGLPHSMIYR (193 aa). An ATP-binding site is contributed by 260 to 266; sequence SGGVDSS.

In terms of assembly, homodimer.

The enzyme catalyses XMP + L-glutamine + ATP + H2O = GMP + L-glutamate + AMP + diphosphate + 2 H(+). It functions in the pathway purine metabolism; GMP biosynthesis; GMP from XMP (L-Gln route): step 1/1. Its function is as follows. Catalyzes the synthesis of GMP from XMP. This Acinetobacter baylyi (strain ATCC 33305 / BD413 / ADP1) protein is GMP synthase [glutamine-hydrolyzing].